The following is a 529-amino-acid chain: Alkaline phosphatase, germ cell type (529 aa).

The signal sequence occupies residues 1–18 (MWGACLLLLGLSLQVCPS). Residue aspartate 60 participates in Mg(2+) binding. Residues aspartate 60 and serine 110 each contribute to the Zn(2+) site. Serine 110 acts as the Phosphoserine intermediate in catalysis. The cysteines at positions 139 and 201 are disulfide-linked. N-linked (GlcNAc...) asparagine glycosylation occurs at asparagine 140. Serine 173 is a Mg(2+) binding site. Glutamate 234 contributes to the Ca(2+) binding site. N-linked (GlcNAc...) asparagine glycosylation is found at asparagine 267 and asparagine 277. The Ca(2+) site is built by phenylalanine 287, glutamate 288, and aspartate 303. Mg(2+) is bound at residue glutamate 329. Zn(2+)-binding residues include aspartate 334, histidine 338, aspartate 375, histidine 376, and histidine 450. Cysteine 485 and cysteine 492 form a disulfide bridge. Serine 502 carries the GPI-anchor amidated serine lipid modification. Positions 503–529 (AVSPGYMSTLLCLLAGKMLMLMAAAEP) are cleaved as a propeptide — removed in mature form.

The protein belongs to the alkaline phosphatase family. Homodimer. Mg(2+) serves as cofactor. Requires Zn(2+) as cofactor. Ca(2+) is required as a cofactor. As to expression, embryo and testis.

It is found in the cell membrane. It carries out the reaction a phosphate monoester + H2O = an alcohol + phosphate. Its activity is regulated as follows. Inhibited by L-leucine, EDTA and heat. In terms of biological role, alkaline phosphatase that can hydrolyze various phosphate compounds. In Mus musculus (Mouse), this protein is Alkaline phosphatase, germ cell type (Alpg).